Here is a 404-residue protein sequence, read N- to C-terminus: Acetate kinase (404 aa).

Position 7 (asparagine 7) interacts with Mg(2+). Lysine 14 contributes to the ATP binding site. Position 98 (arginine 98) interacts with substrate. Aspartate 155 functions as the Proton donor/acceptor in the catalytic mechanism. Residues 214 to 218, 289 to 291, and 337 to 341 contribute to the ATP site; these read HLGNG, DLR, and GIGEN. Glutamate 390 provides a ligand contact to Mg(2+).

The protein belongs to the acetokinase family. As to quaternary structure, homodimer. It depends on Mg(2+) as a cofactor. Mn(2+) is required as a cofactor.

It localises to the cytoplasm. The catalysed reaction is acetate + ATP = acetyl phosphate + ADP. It functions in the pathway metabolic intermediate biosynthesis; acetyl-CoA biosynthesis; acetyl-CoA from acetate: step 1/2. Its function is as follows. Catalyzes the formation of acetyl phosphate from acetate and ATP. Can also catalyze the reverse reaction. This chain is Acetate kinase, found in Rippkaea orientalis (strain PCC 8801 / RF-1) (Cyanothece sp. (strain PCC 8801)).